A 178-amino-acid polypeptide reads, in one-letter code: ATP-dependent protease subunit HslV (178 aa).

Threonine 7 is a catalytic residue. The Na(+) site is built by glycine 162, cysteine 165, and threonine 168.

Belongs to the peptidase T1B family. HslV subfamily. In terms of assembly, a double ring-shaped homohexamer of HslV is capped on each side by a ring-shaped HslU homohexamer. The assembly of the HslU/HslV complex is dependent on binding of ATP.

The protein resides in the cytoplasm. The catalysed reaction is ATP-dependent cleavage of peptide bonds with broad specificity.. Its activity is regulated as follows. Allosterically activated by HslU binding. Protease subunit of a proteasome-like degradation complex believed to be a general protein degrading machinery. The polypeptide is ATP-dependent protease subunit HslV (Cupriavidus metallidurans (strain ATCC 43123 / DSM 2839 / NBRC 102507 / CH34) (Ralstonia metallidurans)).